The following is a 240-amino-acid chain: Zein-alpha 19C2 (240 aa).

The first 21 residues, 1 to 21 (MATKIFSLLMLLALSTCVANA), serve as a signal peptide directing secretion.

The protein belongs to the zein family. As to quaternary structure, interacts with OP10 (via N-terminus).

Zeins are major seed storage proteins. In Zea mays (Maize), this protein is Zein-alpha 19C2.